The primary structure comprises 176 residues: Ribosome maturation factor RimM (176 aa).

Residues 99–173 (KEGEFHLVDL…WLLIKPPPGL (75 aa)) enclose the PRC barrel domain.

The protein belongs to the RimM family. In terms of assembly, binds ribosomal protein uS19.

The protein resides in the cytoplasm. An accessory protein needed during the final step in the assembly of 30S ribosomal subunit, possibly for assembly of the head region. Essential for efficient processing of 16S rRNA. May be needed both before and after RbfA during the maturation of 16S rRNA. It has affinity for free ribosomal 30S subunits but not for 70S ribosomes. This is Ribosome maturation factor RimM from Prochlorococcus marinus (strain MIT 9211).